Here is a 106-residue protein sequence, read N- to C-terminus: UPF0145 protein BH0643 (106 aa).

Belongs to the UPF0145 family.

In Halalkalibacterium halodurans (strain ATCC BAA-125 / DSM 18197 / FERM 7344 / JCM 9153 / C-125) (Bacillus halodurans), this protein is UPF0145 protein BH0643.